The sequence spans 83 residues: RNA-binding protein Hfq (83 aa).

A Sm domain is found at 9–69 (DYFLNQLRKD…ISTFAPARNV (61 aa)).

The protein belongs to the Hfq family. Homohexamer.

Its function is as follows. RNA chaperone that binds small regulatory RNA (sRNAs) and mRNAs to facilitate mRNA translational regulation in response to envelope stress, environmental stress and changes in metabolite concentrations. Also binds with high specificity to tRNAs. This chain is RNA-binding protein Hfq, found in Exiguobacterium sibiricum (strain DSM 17290 / CCUG 55495 / CIP 109462 / JCM 13490 / 255-15).